We begin with the raw amino-acid sequence, 232 residues long: Sugar fermentation stimulation protein homolog (232 aa).

Belongs to the SfsA family.

This Geobacter sulfurreducens (strain ATCC 51573 / DSM 12127 / PCA) protein is Sugar fermentation stimulation protein homolog.